An 837-amino-acid polypeptide reads, in one-letter code: Semaphorin-4G (837 aa).

An N-terminal signal peptide occupies residues Met-1–Ala-17. Residues Val-18–Met-673 lie on the Extracellular side of the membrane. A Sema domain is found at Arg-35–Leu-503. 3 N-linked (GlcNAc...) asparagine glycosylation sites follow: Asn-55, Asn-111, and Asn-126. A disulfide bond links Cys-104 and Cys-115. 3 cysteine pairs are disulfide-bonded: Cys-133-Cys-142, Cys-268-Cys-375, and Cys-292-Cys-335. Residue Asn-386 is glycosylated (N-linked (GlcNAc...) asparagine). The PSI domain maps to Ser-505 to Glu-556. Intrachain disulfides connect Cys-506–Cys-523 and Cys-515–Cys-532. Residues Asn-540 and Asn-596 are each glycosylated (N-linked (GlcNAc...) asparagine). The 83-residue stretch at Pro-565–Thr-647 folds into the Ig-like C2-type domain. A disulfide bridge connects residues Cys-582 and Cys-630. The chain crosses the membrane as a helical span at residues Phe-674–Leu-694. Residues Tyr-695 to Val-837 lie on the Cytoplasmic side of the membrane. A disordered region spans residues Ser-721–Leu-776. Acidic residues predominate over residues Gly-734–Glu-743. Over residues Pro-762–Ala-774 the composition is skewed to pro residues. Residues Ser-794 and Ser-836 each carry the phosphoserine modification.

It belongs to the semaphorin family. As to quaternary structure, interacts with PLXNB2. As to expression, brain, spinal cord, and several sensory organs as well as specific populations of projection neurons.

The protein localises to the cell membrane. In terms of biological role, cell surface receptor for PLXNB2. May play a role in axon guidance. This chain is Semaphorin-4G (Sema4g), found in Mus musculus (Mouse).